The chain runs to 867 residues: Ent-copalyl diphosphate synthase 1, chloroplastic (867 aa).

A chloroplast-targeting transit peptide spans 1–35 (MIHLHSPPTAPAAFGGAGSADWRRRRRWSWSSSSR). A disordered region spans residues 1-134 (MIHLHSPPTA…ADEEADDELQ (134 aa)). A compositionally biased stretch (basic and acidic residues) spans 51 to 64 (RGGDDGGGEDHHAD). Residues 74-89 (AWRARATTAGVSSSSS) show a composition bias toward low complexity. Basic and acidic residues predominate over residues 99-121 (IEHETPRITKWPNESRDLDDHQQ). Residues 124–133 (EADEEADDEL) are compositionally biased toward acidic residues. Lysine 286 is a binding site for substrate. Residues 418 to 421 (EVDD) carry the DXDD motif motif. Lysine 504 contacts substrate.

Belongs to the terpene synthase family. Requires Mg(2+) as cofactor.

The protein localises to the plastid. The protein resides in the chloroplast. The enzyme catalyses (2E,6E,10E)-geranylgeranyl diphosphate = ent-copalyl diphosphate. The protein operates within plant hormone biosynthesis; gibberellin biosynthesis. Its function is as follows. Catalyzes the conversion of geranylgeranyl diphosphate to the gibberellin precursor ent-copalyl diphosphate. The sequence is that of Ent-copalyl diphosphate synthase 1, chloroplastic (CPS1) from Oryza sativa subsp. japonica (Rice).